A 133-amino-acid polypeptide reads, in one-letter code: p53 and DNA damage-regulated protein 1 (133 aa).

The protein belongs to the prefoldin subunit beta family. As to quaternary structure, component of the PAQosome complex which is responsible for the biogenesis of several protein complexes and which consists of R2TP complex members RUVBL1, RUVBL2, RPAP3 and PIH1D1, URI complex members PFDN2, PFDN6, PDRG1, UXT and URI1 as well as ASDURF, POLR2E and DNAAF10/WDR92. As to expression, predominantly expressed in normal testis and exhibits reduced but detectable expression in other organs.

The protein localises to the cytoplasm. May play a role in chaperone-mediated protein folding. The sequence is that of p53 and DNA damage-regulated protein 1 (PDRG1) from Homo sapiens (Human).